A 263-amino-acid polypeptide reads, in one-letter code: Chromosomal replication initiator protein DnaA (263 aa).

A region of interest (domain I, interacts with DnaA modulators) is located at residue Asp-1. Residue Asp-1 is a region of interest, domain II. The segment at 1 to 177 (DSGLGKTHLL…GIINKIEFSI (177 aa)) is domain III, AAA+ region. ATP contacts are provided by Gly-3, Gly-5, Lys-6, and Thr-7. The domain IV, binds dsDNA stretch occupies residues 178 to 263 (IQDNSAAPKI…KNYSEIGVAF (86 aa)).

This sequence belongs to the DnaA family. In terms of assembly, oligomerizes as a right-handed, spiral filament on DNA at oriC.

The protein localises to the cytoplasm. Its function is as follows. Plays an essential role in the initiation and regulation of chromosomal replication. ATP-DnaA binds to the origin of replication (oriC) to initiate formation of the DNA replication initiation complex once per cell cycle. Binds the DnaA box (a 9 base pair repeat at the origin) and separates the double-stranded (ds)DNA. Forms a right-handed helical filament on oriC DNA; dsDNA binds to the exterior of the filament while single-stranded (ss)DNA is stabiized in the filament's interior. The ATP-DnaA-oriC complex binds and stabilizes one strand of the AT-rich DNA unwinding element (DUE), permitting loading of DNA polymerase. After initiation quickly degrades to an ADP-DnaA complex that is not apt for DNA replication. Binds acidic phospholipids. This is Chromosomal replication initiator protein DnaA from Spiroplasma apis.